Here is a 582-residue protein sequence, read N- to C-terminus: Peptidyl-prolyl cis-trans isomerase FKBP10 (582 aa).

An N-terminal signal peptide occupies residues 1–26; it reads MFPAGPPSHSLLRLPLLQLLLLVVQA. PPIase FKBP-type domains are found at residues 62 to 150, 174 to 262, and 286 to 374; these read GDFV…LDVW, GDFV…IDVH, and GDFM…IDFH. N-linked (GlcNAc...) asparagine glycans are attached at residues Asn-70, Asn-182, Asn-294, Asn-310, Asn-352, Asn-393, and Asn-407. The region spanning 399–486 is the PPIase FKBP-type 4 domain; that stretch reads GDFVRYHYNC…LFEVELVSRE (88 aa). EF-hand domains follow at residues 497–532 and 542–577; these read WHKD…QVSE and DPEK…DEER. Positions 510, 512, 514, 516, 521, 555, 557, 559, 561, and 566 each coordinate Ca(2+). The interval 533–582 is disordered; it reads GKGRLMPGQDPEKTIGDMFQNQDRNQDGKITVDELKLKSDEDEERVHEEL. Basic and acidic residues predominate over residues 556–582; the sequence is RNQDGKITVDELKLKSDEDEERVHEEL. Positions 579–582 match the Prevents secretion from ER motif; it reads HEEL.

In terms of processing, glycosylated and phosphorylated.

It localises to the endoplasmic reticulum lumen. It catalyses the reaction [protein]-peptidylproline (omega=180) = [protein]-peptidylproline (omega=0). Its activity is regulated as follows. Inhibited by both FK506 and rapamycin, but not by cyclosporin A. PPIases accelerate the folding of proteins during protein synthesis. The sequence is that of Peptidyl-prolyl cis-trans isomerase FKBP10 (FKBP10) from Homo sapiens (Human).